Here is a 494-residue protein sequence, read N- to C-terminus: Sugar phosphate exchanger 3 (494 aa).

The helical transmembrane segment at 16–36 threads the bilayer; it reads FSHHHVVVFLLTFFSYSLLHA. Asparagine 58 carries an N-linked (GlcNAc...) asparagine glycan. Helical transmembrane passes span 81 to 101, 113 to 133, 147 to 167, 177 to 197, and 209 to 229; these read TLFL…GLFI, WVLS…GALT, LWIV…AVMG, VVFG…ACLA, and FLVT…GLLV. Asparagine 266 is a glycosylation site (N-linked (GlcNAc...) asparagine). 6 consecutive transmembrane segments (helical) span residues 297 to 317, 333 to 353, 357 to 377, 386 to 406, 428 to 448, and 452 to 472; these read LAYA…PFYL, IWYD…SDVL, APVL…YSRS, LLMT…SSAI, GIVD…VSLI, and LGWM…IVFI.

It belongs to the major facilitator superfamily. Organophosphate:Pi antiporter (OPA) (TC 2.A.1.4) family. As to quaternary structure, interacts with ATRAID; the interaction is direct and both proteins are mutually dependent for their stability. In terms of processing, glycosylated. Expressed in liver, kidney, intestine and pancreas.

Its subcellular location is the endoplasmic reticulum membrane. It is found in the lysosome membrane. Functionally, unlike the other SLC37 members, lacks glucose-6-phosphate antiporter activity. In osteoclasts, forms a transporter complex with ATRAID for nitrogen-containing-bisphophonates (N-BPs) required for releasing N-BP molecules that have trafficked to lysosomes through fluid-phase endocytosis into the cytosol. The sequence is that of Sugar phosphate exchanger 3 from Homo sapiens (Human).